The following is a 56-amino-acid chain: MAHENVWFSHPRKYGKGSRQCAHTGRRLGLIRKYGLNISRQSFREYANDIGFVKYR.

The protein belongs to the universal ribosomal protein uS14 family. Component of the small ribosomal subunit (SSU). Mature yeast ribosomes consist of a small (40S) and a large (60S) subunit. The 40S small subunit contains 1 molecule of ribosomal RNA (18S rRNA) and at least 33 different proteins. The large 60S subunit contains 3 rRNA molecules (25S, 5.8S and 5S rRNA) and at least 46 different proteins.

It is found in the cytoplasm. The protein localises to the nucleus. In terms of biological role, component of the ribosome, a large ribonucleoprotein complex responsible for the synthesis of proteins in the cell. The small ribosomal subunit (SSU) binds messenger RNAs (mRNAs) and translates the encoded message by selecting cognate aminoacyl-transfer RNA (tRNA) molecules. The large subunit (LSU) contains the ribosomal catalytic site termed the peptidyl transferase center (PTC), which catalyzes the formation of peptide bonds, thereby polymerizing the amino acids delivered by tRNAs into a polypeptide chain. The nascent polypeptides leave the ribosome through a tunnel in the LSU and interact with protein factors that function in enzymatic processing, targeting, and the membrane insertion of nascent chains at the exit of the ribosomal tunnel. This Schizosaccharomyces pombe (strain 972 / ATCC 24843) (Fission yeast) protein is Small ribosomal subunit protein uS14 (rps29).